The sequence spans 220 residues: uncharacterized protein (220 aa).

This is an uncharacterized protein from Mycoplasma pneumoniae (strain ATCC 29342 / M129 / Subtype 1) (Mycoplasmoides pneumoniae).